We begin with the raw amino-acid sequence, 365 residues long: Oligosaccharides import ATP-binding protein MsmX (365 aa).

The 232-residue stretch at 4-235 folds into the ABC transporter domain; the sequence is LRMEHIYKFY…PENVFVGGFI (232 aa). An ATP-binding site is contributed by 37-44; sequence GPSGCGKS.

It belongs to the ABC transporter superfamily. As to quaternary structure, the complex involved in maltodextrin import is composed of two ATP-binding proteins (MsmX), two transmembrane proteins (MdxF and MdxG) and a solute-binding protein (MdxE). The complex involved in arabinooligosaccharides uptake is composed of two ATP-binding proteins (MsmX), two transmembrane proteins (AraP and AraQ) and a solute-binding protein (AraN). The complex involved in galactooligosaccharides uptake is composed of two ATP-binding proteins (MsmX), two transmembrane proteins (GanP and GanQ) and a solute-binding protein (GanS). The complex involved in melibiose, raffinose and stachyose import is composed of two ATP-binding proteins (MsmX), two transmembrane proteins (MelC and MelD) and a solute-binding protein (MelE). The complex involved in polygalacturonan and rhamnogalacturonan type I uptake is probably composed of two ATP-binding proteins (MsmX), two transmembrane proteins (YtcP and YteP) and a solute-binding protein (YtcQ).

It is found in the cell membrane. Functionally, required to energize different ABC-type saccharide transporters. Part of the MdxEFG-MsmX ABC transporter complex involved in maltodextrin import, of the AraNPQ-MsmX complex involved in arabinooligosaccharides import, of the GanPQS-MsmX complex involved in galactooligosaccharides import, and of the MelEDC-MsmX complex involved in melibiose, raffinose and stachyose import. Is probably also part of the ABC transporter complex YtcQP-YteP-MsmX involved in polygalacturonan and rhamnogalacturonan type I import during pectin degradation. Responsible for energy coupling to the transport system. The chain is Oligosaccharides import ATP-binding protein MsmX (msmX) from Bacillus subtilis (strain 168).